Consider the following 171-residue polypeptide: MAAVAAATTSFSFKDFFKSFMLVELVKGMALTGRYAFRRKVTVQFPEEKTPLSPRFRGLHALRRYENGEERCIACKLCEAVCPALAITIESDVRADGSRRTTRYDIDLTKCIFCGFCEESCPVDSIVETQILEYHGEKRGDLYFTKDMLLAVGDRYEAEIAAAKAADAKYR.

2 consecutive 4Fe-4S ferredoxin-type domains span residues 63-92 and 102-131; these read RRYENGEERCIACKLCEAVCPALAITIESD and TRYDIDLTKCIFCGFCEESCPVDSIVETQI. Cys-72, Cys-75, Cys-78, Cys-82, Cys-111, Cys-114, Cys-117, and Cys-121 together coordinate [4Fe-4S] cluster.

Belongs to the complex I 23 kDa subunit family. As to quaternary structure, NDH-1 is composed of 14 different subunits. Subunits NuoA, H, J, K, L, M, N constitute the membrane sector of the complex. The cofactor is [4Fe-4S] cluster.

It localises to the cell inner membrane. It catalyses the reaction a quinone + NADH + 5 H(+)(in) = a quinol + NAD(+) + 4 H(+)(out). NDH-1 shuttles electrons from NADH, via FMN and iron-sulfur (Fe-S) centers, to quinones in the respiratory chain. The immediate electron acceptor for the enzyme in this species is believed to be ubiquinone. Couples the redox reaction to proton translocation (for every two electrons transferred, four hydrogen ions are translocated across the cytoplasmic membrane), and thus conserves the redox energy in a proton gradient. The chain is NADH-quinone oxidoreductase subunit I from Paracidovorax citrulli (strain AAC00-1) (Acidovorax citrulli).